The following is a 1188-amino-acid chain: MSSSSSDENETTIHRTGSNTGGSGIYSQPRAGSSKRTSNVRHDVSDVDDEEEHYARFREDTAIEVDDAITVLLSSLHFEHKRDIVPTDEDDNKLRELHEKIFALITSESDVNRKRRLKKALPASNCVREQVYYLRRKPSTPPASYYHRLNAALHTIVKESFGEEYRKVATVLGLVEALAEVLILEVHTFGINETNPGEHRNIRKLIANALTNLTYGQIHSKRRLCSYDGFIRCVVRIVIESPNITQVYAGLIRNLSWNADSGMSEALQPTVHALSIAAVHAHTHRFDVTATLSALWNLAGHSVENKRTICDTPNCLKVLASLLSPDARFTSLVDSATGILKYVSQYLANTSTHLELRSLLITRMLTLLKSASFTCVTNTLGAIANLIVKDPHMQQMIRQDMAAVQQLNVLRNSNRDDIRTAVKSVLNTLNQPCSHRYGDMSHSVGGGATGMQMLSEPQLQMQTSHHAYHGTASPRLLSLRATRASPGKYIQPQAQQQLIQTPQVDQRSSSLPRHFAVQRNGFVMAQSYNQQMDQHQQQQMIYQLQQQQQIMFQTEDQAQMEHHQQIMYLQQQQQQFHQIQQQQQMQKAQEADPVPPTDDDLDIPTSTVMGTRSNSERSLGSMNPGSVMTNWNSSLDTAANSSRALSPVSYNDIPASPTMCAQVFNLPKSTESEHHQLTSQQQNTTHYSSGSANTMTRSDGATTVPMDNIITPTYAILNPILVHEQTPNGTVPRKTSEELDSPDDVLPGPSLEEEEGDYAIIGGAAQKTDDELLTRSIQSEMPTSSSTPKMKVSPRLNGFFSPTQKTTSSPAWSHPDTSPIPKSSSHRTQPNRRQDASDADRLLMESIMSEMPKSRIISPRLAGTQQYLEPEPERRSHSKNEEADRRDAFTASHEPSDHNGIDVARGSDWSPQQQLHRMESLESQASSEDSFGLTAEEPNSSTSGAAANTMRFDDEIDASLPMDCVDDDDYDYTYDHFEDYEDEEDPDATQFDDGVDAQLTIDCSMISSGSGSSQRNETTTTSRDSKALATSTPKGSASSLPGVRQATRVSTNGKSRLPVPKTNGSLVDKNPKPIIASRRPRLPPKPTLLKDKHYPEEDSIENQTRDDTIYVNAPVVEAEQERIYMNALKQQKNIEQSPSIGNGSPIAKSAIVTPYNYQKPPFTGRNNGEMSNEKSVTPNPKQMLVTIV.

The tract at residues 1–50 is disordered; sequence MSSSSSDENETTIHRTGSNTGGSGIYSQPRAGSSKRTSNVRHDVSDVDDE. The required for interaction with bar-1 and hmp-2 stretch occupies residues 1–486; sequence MSSSSSDENE…LSLRATRASP (486 aa). Residues 314–358 form an ARM repeat; that stretch reads NCLKVLASLLSPDARFTSLVDSATGILKYVSQYLANTSTHLELRS. Low complexity predominate over residues 579–588; sequence IQQQQQMQKA. 6 disordered regions span residues 579–624, 670–702, 726–751, 778–952, 1003–1092, and 1157–1181; these read IQQQ…SMNP, TESE…DGAT, TPNG…GPSL, QSEM…TMRF, CSMI…LKDK, and YQKP…PNPK. The interval 600–1188 is required for interaction with pry-1; it reads DLDIPTSTVM…NPKQMLVTIV (589 aa). Composition is skewed to polar residues over residues 604-624 and 677-701; these read PTST…SMNP and LTSQ…SDGA. 2 stretches are compositionally biased toward polar residues: residues 778 to 788 and 800 to 811; these read QSEMPTSSSTP and FSPTQKTTSSPA. Composition is skewed to basic and acidic residues over residues 832-843 and 871-900; these read RRQDASDADRLL and EPER…DHNG. Composition is skewed to polar residues over residues 909 to 929, 937 to 946, 1014 to 1039, and 1164 to 1180; these read WSPQ…SSED, EPNSSTSGAA, QRNE…SASS, and GRNN…TPNP.

It belongs to the adenomatous polyposis coli (APC) family. Interacts (via N-terminus) with bar-1 and hmp-2; the interaction with hmp-2 is relatively weak. Interacts (via C-terminus) with pry-1 (via N-terminus). Probably associates with bar-1, gsk-3, pry-1 in a complex. As to expression, during the L1 stage, expressed in vulval precursor cells (P3-8.p), seam cells and excretory cells.

The protein resides in the cell junction. Its subcellular location is the adherens junction. The protein localises to the cytoplasm. It localises to the nucleus. Its function is as follows. Has a role in endoderm cell specification and pharyngeal development. Required for the migration of epithelial cells, organization of the anterior seam cells and ceh-13 expression during embryo morphogenesis. Prevents hyperactivation of the Wnt signaling pathway during endoderm development, probably by preventing hmp-2 nuclear translocation. During larval development, apr-1 is required for expression of lin-39 in P3-8.p. Shown to negatively regulate Wnt signaling in vulval precursor cells. Has a role in cell division by establishing the polarity of the mother cell which forms the asymmetries of the daughter nuclei. During the L4 larval stage, it is required for the asymmetric division and self-renewal of seam cells. Thought to regulate export of wrm-1 from the nucleus possibly as part of a complex involving pry-1. This chain is Adenomatous polyposis coli protein-related protein 1, found in Caenorhabditis elegans.